The sequence spans 310 residues: Porphobilinogen deaminase (310 aa).

C241 carries the S-(dipyrrolylmethanemethyl)cysteine modification.

This sequence belongs to the HMBS family. As to quaternary structure, monomer. Dipyrromethane serves as cofactor.

The catalysed reaction is 4 porphobilinogen + H2O = hydroxymethylbilane + 4 NH4(+). It functions in the pathway porphyrin-containing compound metabolism; protoporphyrin-IX biosynthesis; coproporphyrinogen-III from 5-aminolevulinate: step 2/4. Functionally, tetrapolymerization of the monopyrrole PBG into the hydroxymethylbilane pre-uroporphyrinogen in several discrete steps. The polypeptide is Porphobilinogen deaminase (Lysinibacillus sphaericus (strain C3-41)).